A 259-amino-acid chain; its full sequence is Putative electron transfer flavoprotein subunit YgcR (259 aa).

Belongs to the ETF beta-subunit/FixA family. In terms of assembly, ygcQ and YgcR form a heterodimer.

Its function is as follows. May play a role in a redox process. The protein is Putative electron transfer flavoprotein subunit YgcR (ygcR) of Escherichia coli (strain K12).